The following is a 79-amino-acid chain: MLEEALEHLVKGIVDNPDDVQVASRNLRRGRVLEVRVHPDDLGKVIGRNGRTARALRTVVGAIGGRGVRVDLVDVDHVR.

Positions 30-79 (GRVLEVRVHPDDLGKVIGRNGRTARALRTVVGAIGGRGVRVDLVDVDHVR) constitute a KH domain.

Belongs to the KhpA RNA-binding protein family.

Its subcellular location is the cytoplasm. The protein localises to the nucleoid. Functionally, a probable RNA-binding protein. In Streptomyces coelicolor (strain ATCC BAA-471 / A3(2) / M145), this protein is RNA-binding protein KhpA.